The primary structure comprises 448 residues: Protein TraN (448 aa).

Disordered stretches follow at residues 243-273 (NRVG…NSGE) and 411-448 (EAAR…NKPS). Over residues 246–261 (GASRTATTARAGQQQS) the composition is skewed to low complexity. Residues 262 to 271 (PAVKQSSGNS) show a composition bias toward polar residues. Over residues 421 to 437 (RKQEQEKKQAQERERGR) the composition is skewed to basic and acidic residues. The span at 438 to 448 (SQSLGLSNKPS) shows a compositional bias: polar residues.

It to H.influenzae HI_1407.

This Escherichia coli protein is Protein TraN (traN).